The primary structure comprises 114 residues: Replication initiation control protein YabA (114 aa).

Zn(2+) is bound by residues H84, C86, C102, and C105.

It belongs to the YabA family. In terms of assembly, homotetramer. Interacts with both DnaA and DnaN, acting as a bridge between these two proteins. It depends on Zn(2+) as a cofactor.

The protein resides in the cytoplasm. Its subcellular location is the nucleoid. Its function is as follows. Involved in control of chromosome replication initiation. Inhibits the cooperative binding of DnaA to the oriC region, thus negatively regulating initiation of chromosome replication. Inhibits the ability of DnaA-ATP to form a helix on DNA; does not disassemble preformed DnaA-DNA helices. Decreases the residence time of DnaA on the chromosome at its binding sites (oriC, replication forks and promoter-binding sites). Tethers DnaA to the replication machinery via the DNA polymerase beta sliding clamp subunit (dnaN). Associates with oriC and other DnaA targets on the chromosome in a DnaA-dependent manner. In Ligilactobacillus salivarius (strain UCC118) (Lactobacillus salivarius), this protein is Replication initiation control protein YabA.